We begin with the raw amino-acid sequence, 502 residues long: MSKDFILAVDQGTTSSRAIIFDKKGNIRKIAQKEFTQIYPKSGWVEHDAMEIWGTQSGVMREALEFGRVKPDQIAAIGITNQRETVIVWDKETGDPVYNAIVWQCRRTSSICDEIKRDPQFVKYIKENTGLVVDAYFSGTKVKWILDNVEGAREKANAGKLLMGTIDTWLIWNLTRGKVHATDYSNASRTMLFNINSLEWDKKILDYLNIPESMLPEVKNSSEVFGVTDSHTLGGAEIPIAGVAGDQHAALFGHCCFEKGMAKNTYGTGCFALMNVGDKPVYSDEGLLTTIAWAENGKPTYALEGSVFIAGAVIQWIRDGLGLVRSAEDSEYYATKIDSTNGVYLVPAFVGLGTPYWDMYARGTIVGITRDTKREHIIRAALEAIAYQAKDVLECMKEDTGLDLAGLRVDGGAVQNNFLMQFQSDILQSEISKPKINEITGLGAVFLAGLAVGFWKDKQELKSILTTEKVFEPQKDSQAVAHDYRGWKKAVERSKAWAECYS.

Thr-13 contacts ADP. Residues Thr-13, Thr-14, and Ser-15 each contribute to the ATP site. Thr-13 serves as a coordination point for sn-glycerol 3-phosphate. Arg-17 contributes to the ADP binding site. The sn-glycerol 3-phosphate site is built by Arg-83, Glu-84, Tyr-136, and Asp-246. Residues Arg-83, Glu-84, Tyr-136, Asp-246, and Gln-247 each contribute to the glycerol site. Thr-268 and Gly-311 together coordinate ADP. Residues Thr-268, Gly-311, Gln-315, and Gly-412 each contribute to the ATP site. Residues Gly-412 and Asn-416 each coordinate ADP.

This sequence belongs to the FGGY kinase family.

It catalyses the reaction glycerol + ATP = sn-glycerol 3-phosphate + ADP + H(+). It participates in polyol metabolism; glycerol degradation via glycerol kinase pathway; sn-glycerol 3-phosphate from glycerol: step 1/1. Its activity is regulated as follows. Inhibited by fructose 1,6-bisphosphate (FBP). Functionally, key enzyme in the regulation of glycerol uptake and metabolism. Catalyzes the phosphorylation of glycerol to yield sn-glycerol 3-phosphate. In Francisella tularensis subsp. mediasiatica (strain FSC147), this protein is Glycerol kinase.